A 200-amino-acid chain; its full sequence is Holliday junction branch migration complex subunit RuvA (200 aa).

Residues 1–64 (MIGHLRGIIV…EDAHTLYGFH (64 aa)) form a domain I region. The tract at residues 65–143 (NDHERRLFRA…RWHTNDTPSP (79 aa)) is domain II. A disordered region spans residues 133 to 152 (SRWHTNDTPSPEGLRSSNTQ). The flexible linker stretch occupies residues 144–148 (EGLRS). A domain III region spans residues 149 to 200 (SNTQPTQDAISALMALGYKPQEAKRAIDAIQKPDLSAETLIRLALKQMVLGT).

Belongs to the RuvA family. Homotetramer. Forms an RuvA(8)-RuvB(12)-Holliday junction (HJ) complex. HJ DNA is sandwiched between 2 RuvA tetramers; dsDNA enters through RuvA and exits via RuvB. An RuvB hexamer assembles on each DNA strand where it exits the tetramer. Each RuvB hexamer is contacted by two RuvA subunits (via domain III) on 2 adjacent RuvB subunits; this complex drives branch migration. In the full resolvosome a probable DNA-RuvA(4)-RuvB(12)-RuvC(2) complex forms which resolves the HJ.

The protein resides in the cytoplasm. In terms of biological role, the RuvA-RuvB-RuvC complex processes Holliday junction (HJ) DNA during genetic recombination and DNA repair, while the RuvA-RuvB complex plays an important role in the rescue of blocked DNA replication forks via replication fork reversal (RFR). RuvA specifically binds to HJ cruciform DNA, conferring on it an open structure. The RuvB hexamer acts as an ATP-dependent pump, pulling dsDNA into and through the RuvAB complex. HJ branch migration allows RuvC to scan DNA until it finds its consensus sequence, where it cleaves and resolves the cruciform DNA. The protein is Holliday junction branch migration complex subunit RuvA of Coxiella burnetii (strain CbuK_Q154) (Coxiella burnetii (strain Q154)).